Here is a 200-residue protein sequence, read N- to C-terminus: Small ribosomal subunit protein uS4 (200 aa).

In terms of domain architecture, S4 RNA-binding spans 92–155; it reads SRLDAVVYSL…QNLDIIKESV (64 aa).

The protein belongs to the universal ribosomal protein uS4 family. In terms of assembly, part of the 30S ribosomal subunit. Contacts protein S5. The interaction surface between S4 and S5 is involved in control of translational fidelity.

In terms of biological role, one of the primary rRNA binding proteins, it binds directly to 16S rRNA where it nucleates assembly of the body of the 30S subunit. Functionally, with S5 and S12 plays an important role in translational accuracy. The polypeptide is Small ribosomal subunit protein uS4 (Staphylococcus epidermidis (strain ATCC 35984 / DSM 28319 / BCRC 17069 / CCUG 31568 / BM 3577 / RP62A)).